A 347-amino-acid polypeptide reads, in one-letter code: Actin-like protein MamK (347 aa).

Residues lysine 9, 20–21 (TS), and aspartate 76 each bind ATP. Glutamate 143 contacts Mg(2+). Residues 164-166 (AGT), 218-222 (KEQFS), and glycine 289 each bind ATP.

The protein belongs to the FtsA/MreB family. MamK subfamily. As to quaternary structure, forms cytoplasmic filaments. Filaments are parallel (polar) and double-helical. MamK subunits from each of the two strands are juxtaposed, each monomer binds ADP. At cell poles and septa interacts with methyl-accepting chemotaxis protein Amb0944 (MCP10). Forms filaments with MamK-like protein.

It is found in the cytoplasm. The protein localises to the cytoskeleton. The protein resides in the magnetosome membrane. It carries out the reaction ATP + H2O = ADP + phosphate + H(+). Filament turnover is promoted by MamJ and/or LimJ which have overlapping function; at least one other protein is required for turnover. MamK filament dynamics are probably required for the assembly or maintenance of the magnetosome chain. In terms of biological role, protein with ATPase activity which forms dynamic cytoplasmic filaments (probably with paralog MamK-like) that organize magnetosomes into long chains running parallel to the long axis of the cell. Turnover of MamK filaments is probably promoted by MamK-like, which provides a monomer pool. Forms twisted filaments in the presence of ATP or GTP. Serves to close gaps between magnetosomes in the chain. Interaction with MCP10 is involved in controlling the response to magnetic fields, possibly by controlling flagellar rotation. Expression in E.coli yields a filament in the cell's longitudinal axis; the protein nucleates at several sites and one extremity of the filament is located at the cell pole. This Paramagnetospirillum magneticum (strain ATCC 700264 / AMB-1) (Magnetospirillum magneticum) protein is Actin-like protein MamK (mamK).